The primary structure comprises 932 residues: Valine--tRNA ligase (932 aa).

The 'HIGH' region motif lies at 75-85 (PNVTGQLHMGH). The 'KMSKS' region motif lies at 568–572 (KMSKS). An ATP-binding site is contributed by lysine 571. Positions 863-929 (TVDVAAERKR…ERITARLEGL (67 aa)) form a coiled coil.

The protein belongs to the class-I aminoacyl-tRNA synthetase family. ValS type 1 subfamily. Monomer.

The protein resides in the cytoplasm. The catalysed reaction is tRNA(Val) + L-valine + ATP = L-valyl-tRNA(Val) + AMP + diphosphate. Functionally, catalyzes the attachment of valine to tRNA(Val). As ValRS can inadvertently accommodate and process structurally similar amino acids such as threonine, to avoid such errors, it has a 'posttransfer' editing activity that hydrolyzes mischarged Thr-tRNA(Val) in a tRNA-dependent manner. The sequence is that of Valine--tRNA ligase from Corynebacterium jeikeium (strain K411).